Reading from the N-terminus, the 708-residue chain is ARF GTPase-activating protein GIT2 (708 aa).

Residues 1 to 124 (MSKRLRSSDV…AFVHRLPCRE (124 aa)) form the Arf-GAP domain. A C4-type zinc finger spans residues 11–34 (CADCNGPDPSWASVNRGTFICDEC). 3 ANK repeats span residues 132-161 (DLSK…QANF), 166-195 (KGST…DPGT), and 199-228 (SGKT…ELTD). The disordered stretch occupies residues 376 to 592 (STQHSTESQD…SPTLPSTEDV (217 aa)). Residues 384 to 401 (QDNDQPDYDSVASDEDTD) show a composition bias toward acidic residues. Phosphoserine is present on residues Ser-393 and Ser-396. Thr-400 bears the Phosphothreonine mark. A compositionally biased stretch (polar residues) spans 407–438 (SKANRQKLQTLQSENSSLRRQATASACQVQTG). The segment covering 504 to 518 (TSSSSLPSFPSTLSW) has biased composition (low complexity). Phosphoserine is present on residues Ser-508, Ser-511, and Ser-519. A compositionally biased stretch (basic and acidic residues) spans 519-532 (SRDESARRASRLEK). Thr-536 is subject to Phosphothreonine. Residue Ser-563 is modified to Phosphoserine.

In terms of assembly, may form heterooligomers with GIT1. Directly interacts with protein Piccolo/PCLO. Interacts with PPFIA1 and PPFIA2. Interacts with ARHGEF7. Identified in a complex with ARHGEF6 and BIN2. Interacts with PAK3. Interacts with PXN/paxillin. Interacts with TGFB1I1. Forms a complex with EFNB1 and GRB4/NCK2. In terms of processing, tyrosine phosphorylated when coexpressed in cells with PTK2/FAK1 and SRC. As to expression, expressed in the brain (at protein level).

Functionally, GTPase-activating protein for ADP ribosylation factor family members, including ARF1. In Mus musculus (Mouse), this protein is ARF GTPase-activating protein GIT2 (Git2).